A 166-amino-acid chain; its full sequence is Urease accessory protein UreE (166 aa).

The segment at 133 to 154 is disordered; that stretch reads QPEHGAYGGGHHHSRHGDEDFN.

Belongs to the UreE family.

It is found in the cytoplasm. In terms of biological role, involved in urease metallocenter assembly. Binds nickel. Probably functions as a nickel donor during metallocenter assembly. This is Urease accessory protein UreE from Pseudomonas fluorescens (strain SBW25).